A 356-amino-acid chain; its full sequence is NADH-quinone oxidoreductase subunit H (356 aa).

8 consecutive transmembrane segments (helical) span residues 18–38 (IIMI…IAYI), 87–107 (GVFL…WAVI), 120–140 (VGIL…IMAG), 166–186 (IGFV…SAVV), 205–225 (ILNW…VSAL), 265–285 (AITT…LPPI), 292–312 (WVPG…LIAM), and 333–353 (FLPL…FAGI).

Belongs to the complex I subunit 1 family. NDH-1 is composed of 14 different subunits. Subunits NuoA, H, J, K, L, M, N constitute the membrane sector of the complex.

It is found in the cell inner membrane. It catalyses the reaction a quinone + NADH + 5 H(+)(in) = a quinol + NAD(+) + 4 H(+)(out). In terms of biological role, NDH-1 shuttles electrons from NADH, via FMN and iron-sulfur (Fe-S) centers, to quinones in the respiratory chain. The immediate electron acceptor for the enzyme in this species is believed to be ubiquinone. Couples the redox reaction to proton translocation (for every two electrons transferred, four hydrogen ions are translocated across the cytoplasmic membrane), and thus conserves the redox energy in a proton gradient. This subunit may bind ubiquinone. The polypeptide is NADH-quinone oxidoreductase subunit H (Bradyrhizobium sp. (strain ORS 278)).